Reading from the N-terminus, the 393-residue chain is NAD(P)H-quinone oxidoreductase subunit H, chloroplastic (393 aa).

The protein belongs to the complex I 49 kDa subunit family. As to quaternary structure, NDH is composed of at least 16 different subunits, 5 of which are encoded in the nucleus.

Its subcellular location is the plastid. The protein resides in the chloroplast thylakoid membrane. The catalysed reaction is a plastoquinone + NADH + (n+1) H(+)(in) = a plastoquinol + NAD(+) + n H(+)(out). It carries out the reaction a plastoquinone + NADPH + (n+1) H(+)(in) = a plastoquinol + NADP(+) + n H(+)(out). Functionally, NDH shuttles electrons from NAD(P)H:plastoquinone, via FMN and iron-sulfur (Fe-S) centers, to quinones in the photosynthetic chain and possibly in a chloroplast respiratory chain. The immediate electron acceptor for the enzyme in this species is believed to be plastoquinone. Couples the redox reaction to proton translocation, and thus conserves the redox energy in a proton gradient. This is NAD(P)H-quinone oxidoreductase subunit H, chloroplastic from Barbarea verna (Land cress).